A 1868-amino-acid polypeptide reads, in one-letter code: Protein TIC 214 (1868 aa).

6 consecutive transmembrane segments (helical) span residues 11–31 (LLLLWMNIVNSVVLVGLYYGF), 64–84 (FIMGQFIIFISTYYPPLHLAL), 87–107 (PHTLTVLVLPYLLLHFLFFWN), 126–146 (LSIQYVFLNNLIFQLFNHFIL), 166–186 (ILFVISSFFGWLIGHILLMKS), and 221–241 (IFSILLFITCVCYLGRMPSPI). Basic and acidic residues predominate over residues 248–276 (ESSKGEEKKKTEKERDVEMETISKTKKIE). Disordered stretches follow at residues 248-277 (ESSKGEEKKKTEKERDVEMETISKTKKIEQ), 617-643 (FDFEEEEEEEEEEDDEEEPTDDHGIRS), 658-700 (DEDT…QAEE), 782-806 (TSDYAGEGAKEEEHEEEKREYKRKE), and 1537-1607 (YIDP…RKKK). Acidic residues predominate over residues 617-636 (FDFEEEEEEEEEEDDEEEPT). Residues 674–683 (AKNSDQAKNS) are compositionally biased toward polar residues. 3 stretches are compositionally biased toward basic and acidic residues: residues 684–700 (DQAKKSDQAKNSDQAEE), 789–806 (GAKEEEHEEEKREYKRKE), and 1537–1576 (YIDPKVKSNQKERSNPKAESNQKEYLELENRNRDEKERQH).

This sequence belongs to the TIC214 family. As to quaternary structure, part of the Tic complex.

It localises to the plastid. The protein localises to the chloroplast inner membrane. Its function is as follows. Involved in protein precursor import into chloroplasts. May be part of an intermediate translocation complex acting as a protein-conducting channel at the inner envelope. In Nuphar advena (Common spatterdock), this protein is Protein TIC 214.